The sequence spans 122 residues: UPF0482 protein Spro_2288 (122 aa).

The N-terminal stretch at 1–31 is a signal peptide; the sequence is MKTLSTQRLLRGMLPVAMLMLMGAWQAPALA. The disordered stretch occupies residues 46 to 71; that stretch reads SNSGAMSTEAARQSKQQFNDTKSLRN.

The protein belongs to the UPF0482 family.

The protein is UPF0482 protein Spro_2288 of Serratia proteamaculans (strain 568).